Reading from the N-terminus, the 381-residue chain is Putative acyl-CoA dehydrogenase YdbM (381 aa).

FAD contacts are provided by residues 158 to 160 and 337 to 341; these read FTT and RIVGA.

This sequence belongs to the acyl-CoA dehydrogenase family. It depends on FAD as a cofactor.

In Bacillus subtilis (strain 168), this protein is Putative acyl-CoA dehydrogenase YdbM (ydbM).